The following is a 325-amino-acid chain: UPF0324 membrane protein Bd1437 (325 aa).

8 helical membrane-spanning segments follow: residues 21–43, 58–80, 87–105, 115–137, 144–166, 211–230, 243–260, and 302–324; these read IAALLCFFPFVSSAAALVLGIVL, YTHHLLSLSVIGLGAGMDLMVVG, IGYTVVGISFTLLLGMLIG, STLITVGTAICGGSAIAAVAPTI, VSVALGTVFMLNACALVIFPWIG, ARALWIVPVTFLIGLFYFRG, PWFILGFLIAAALVTWIP, and LQGVGLWIVVASCTLGAILIGWI.

Belongs to the UPF0324 family.

It is found in the cell membrane. This Bdellovibrio bacteriovorus (strain ATCC 15356 / DSM 50701 / NCIMB 9529 / HD100) protein is UPF0324 membrane protein Bd1437.